The following is a 314-amino-acid chain: Homoserine kinase (314 aa).

95–105 (PHSRGLGSSAA) provides a ligand contact to ATP.

It belongs to the GHMP kinase family. Homoserine kinase subfamily.

The protein localises to the cytoplasm. It carries out the reaction L-homoserine + ATP = O-phospho-L-homoserine + ADP + H(+). It participates in amino-acid biosynthesis; L-threonine biosynthesis; L-threonine from L-aspartate: step 4/5. Catalyzes the ATP-dependent phosphorylation of L-homoserine to L-homoserine phosphate. This Mycolicibacterium vanbaalenii (strain DSM 7251 / JCM 13017 / BCRC 16820 / KCTC 9966 / NRRL B-24157 / PYR-1) (Mycobacterium vanbaalenii) protein is Homoserine kinase.